The chain runs to 401 residues: MHCDVLWHNAQLMTLDAADGGLGIVDDGIVACRHGHIVYAGAAAQAPALQPDSAHDCRRRWISPGLIDCHTHLVYAGNRANEFEQRLRGASYADIAAAGGGIVATVRATRAADDAALLAASLPRLDAMLGEGVTTLEIKSGYGLTLDDEVKQLRVARQLAALRKVEVVPTFLGAHAVPPGGQAQHYIDQVCTQMIPAIATQGLAEAVDVFCEHLAFSQAQAEKVFVAAQAHGLRIKIHAEQLSNQHGAELAARYGALSADHIEYLDQTGIAAMAAAGTVAVLLPGAFYFTRDTQLPPIAALRTAGVPLALATDCNPGTSPLTSPLLAMNMAATLFRMTVDECIAGFTREAARALGRSERLGQLRAGMDCDLAIWNIDAPADLVYRMGFNPLHARVWRGHLC.

Fe(3+) is bound by residues His70 and His72. His70 and His72 together coordinate Zn(2+). The 4-imidazolone-5-propanoate site is built by Arg79, Tyr142, and His175. Tyr142 is a binding site for N-formimidoyl-L-glutamate. Fe(3+) is bound at residue His238. His238 serves as a coordination point for Zn(2+). Residue Gln241 coordinates 4-imidazolone-5-propanoate. Asp313 provides a ligand contact to Fe(3+). Asp313 provides a ligand contact to Zn(2+). N-formimidoyl-L-glutamate contacts are provided by Asn315 and Gly317. A 4-imidazolone-5-propanoate-binding site is contributed by Thr318.

Belongs to the metallo-dependent hydrolases superfamily. HutI family. It depends on Zn(2+) as a cofactor. Fe(3+) is required as a cofactor.

The protein resides in the cytoplasm. It catalyses the reaction 4-imidazolone-5-propanoate + H2O = N-formimidoyl-L-glutamate. The protein operates within amino-acid degradation; L-histidine degradation into L-glutamate; N-formimidoyl-L-glutamate from L-histidine: step 3/3. In terms of biological role, catalyzes the hydrolytic cleavage of the carbon-nitrogen bond in imidazolone-5-propanoate to yield N-formimidoyl-L-glutamate. It is the third step in the universal histidine degradation pathway. In Xanthomonas euvesicatoria pv. vesicatoria (strain 85-10) (Xanthomonas campestris pv. vesicatoria), this protein is Imidazolonepropionase.